The sequence spans 571 residues: 2-succinyl-5-enolpyruvyl-6-hydroxy-3-cyclohexene-1-carboxylate synthase (571 aa).

Belongs to the TPP enzyme family. MenD subfamily. In terms of assembly, homodimer. The cofactor is Mg(2+). Mn(2+) serves as cofactor. It depends on thiamine diphosphate as a cofactor.

The enzyme catalyses isochorismate + 2-oxoglutarate + H(+) = 5-enolpyruvoyl-6-hydroxy-2-succinyl-cyclohex-3-ene-1-carboxylate + CO2. It participates in quinol/quinone metabolism; 1,4-dihydroxy-2-naphthoate biosynthesis; 1,4-dihydroxy-2-naphthoate from chorismate: step 2/7. It functions in the pathway quinol/quinone metabolism; menaquinone biosynthesis. Functionally, catalyzes the thiamine diphosphate-dependent decarboxylation of 2-oxoglutarate and the subsequent addition of the resulting succinic semialdehyde-thiamine pyrophosphate anion to isochorismate to yield 2-succinyl-5-enolpyruvyl-6-hydroxy-3-cyclohexene-1-carboxylate (SEPHCHC). The polypeptide is 2-succinyl-5-enolpyruvyl-6-hydroxy-3-cyclohexene-1-carboxylate synthase (Lysinibacillus sphaericus (strain C3-41)).